The chain runs to 293 residues: Ribosomal protein L11 methyltransferase (293 aa).

Thr-145, Gly-166, Asp-188, and Asn-230 together coordinate S-adenosyl-L-methionine.

It belongs to the methyltransferase superfamily. PrmA family.

Its subcellular location is the cytoplasm. It catalyses the reaction L-lysyl-[protein] + 3 S-adenosyl-L-methionine = N(6),N(6),N(6)-trimethyl-L-lysyl-[protein] + 3 S-adenosyl-L-homocysteine + 3 H(+). Its function is as follows. Methylates ribosomal protein L11. This chain is Ribosomal protein L11 methyltransferase, found in Shigella sonnei (strain Ss046).